The following is an 891-amino-acid chain: Alanine--tRNA ligase (891 aa).

Residues H564, H568, C681, and H685 each contribute to the Zn(2+) site.

It belongs to the class-II aminoacyl-tRNA synthetase family. It depends on Zn(2+) as a cofactor.

Its subcellular location is the cytoplasm. The catalysed reaction is tRNA(Ala) + L-alanine + ATP = L-alanyl-tRNA(Ala) + AMP + diphosphate. In terms of biological role, catalyzes the attachment of alanine to tRNA(Ala) in a two-step reaction: alanine is first activated by ATP to form Ala-AMP and then transferred to the acceptor end of tRNA(Ala). Also edits incorrectly charged Ser-tRNA(Ala) and Gly-tRNA(Ala) via its editing domain. This chain is Alanine--tRNA ligase, found in Methylorubrum extorquens (strain PA1) (Methylobacterium extorquens).